Here is a 296-residue protein sequence, read N- to C-terminus: Acetylglutamate kinase (296 aa).

Substrate-binding positions include 69–70, Arg-91, and Asn-193; that span reads GG.

This sequence belongs to the acetylglutamate kinase family. ArgB subfamily.

The protein localises to the cytoplasm. It catalyses the reaction N-acetyl-L-glutamate + ATP = N-acetyl-L-glutamyl 5-phosphate + ADP. It functions in the pathway amino-acid biosynthesis; L-arginine biosynthesis; N(2)-acetyl-L-ornithine from L-glutamate: step 2/4. In terms of biological role, catalyzes the ATP-dependent phosphorylation of N-acetyl-L-glutamate. This is Acetylglutamate kinase from Verminephrobacter eiseniae (strain EF01-2).